Reading from the N-terminus, the 305-residue chain is UDP-3-O-acyl-N-acetylglucosamine deacetylase (305 aa).

Zn(2+) contacts are provided by histidine 79, histidine 238, and aspartate 242. Residue histidine 265 is the Proton donor of the active site.

Belongs to the LpxC family. The cofactor is Zn(2+).

The catalysed reaction is a UDP-3-O-[(3R)-3-hydroxyacyl]-N-acetyl-alpha-D-glucosamine + H2O = a UDP-3-O-[(3R)-3-hydroxyacyl]-alpha-D-glucosamine + acetate. Its pathway is glycolipid biosynthesis; lipid IV(A) biosynthesis; lipid IV(A) from (3R)-3-hydroxytetradecanoyl-[acyl-carrier-protein] and UDP-N-acetyl-alpha-D-glucosamine: step 2/6. Its function is as follows. Catalyzes the hydrolysis of UDP-3-O-myristoyl-N-acetylglucosamine to form UDP-3-O-myristoylglucosamine and acetate, the committed step in lipid A biosynthesis. This Sodalis glossinidius (strain morsitans) protein is UDP-3-O-acyl-N-acetylglucosamine deacetylase.